The sequence spans 166 residues: Large ribosomal subunit protein uL11 (166 aa).

The protein belongs to the universal ribosomal protein uL11 family.

Functionally, this protein binds directly to 26S ribosomal RNA. The sequence is that of Large ribosomal subunit protein uL11 (RPL12) from Prunus armeniaca (Apricot).